The sequence spans 359 residues: MILNSSTEDGIKRIQDDCPKAGRHNYIFIMIPTLYSIIFVVGLFGNSLVVIVIYFYMKLKTVASVFLLNLALADLCFLLTLPLWAVYTAMEYRWPFGNYLCKIASGSVSFNLYASVFLLTCLSIDRYLAIVHPMKSRLRRTMLVAKVTCIIIWLLAGLASLPTIIHRNVFFIENTNITVCAFHYESQNSTLPVGLGLTKNILGFLFPFLIILTSYTLIWKTLKKAYEIQKNKPRKDDIFKIILAIVLFFFFSWVPHQIFTFMDVLIQLGLIRDCKIEDIVDTAMPITICLAYFNNCLNPPFYGFLGKKFKKYFLQLLKYIPPKAKSHSNLSTKMSTLSYRPSENGNSSTKKPAPCTEVE.

Topologically, residues Met-1–Asn-25 are extracellular. An N-linked (GlcNAc...) asparagine glycan is attached at Asn-4. Positions 15 and 17 each coordinate angiotensin II. 2 disulfides stabilise this stretch: Cys-18–Cys-274 and Cys-101–Cys-180. The helical transmembrane segment at Tyr-26–Phe-55 threads the bilayer. Residues Tyr-56–Thr-61 lie on the Cytoplasmic side of the membrane. A helical transmembrane segment spans residues Val-62 to Ala-89. Residues Met-90–Asn-98 lie on the Extracellular side of the membrane. A helical membrane pass occupies residues Tyr-99 to Asp-125. Residues Arg-126 to Thr-141 lie on the Cytoplasmic side of the membrane. A helical membrane pass occupies residues Met-142–Ile-165. Topologically, residues His-166–Thr-190 are extracellular. Arg-167 serves as a coordination point for angiotensin II. N-linked (GlcNAc...) asparagine glycosylation is present at Asn-176. Angiotensin II is bound by residues Phe-182, His-183, and Tyr-184. Asn-188 carries N-linked (GlcNAc...) asparagine glycosylation. Residues Leu-191 to Thr-216 form a helical membrane-spanning segment. Lys-199 provides a ligand contact to angiotensin II. At Leu-217 to Phe-239 the chain is on the cytoplasmic side. The chain crosses the membrane as a helical span at residues Lys-240 to Leu-268. Over Gly-269–Asp-278 the chain is Extracellular. The chain crosses the membrane as a helical span at residues Ile-279–Phe-304. At Leu-305 to Glu-359 the chain is on the cytoplasmic side. The segment covering Ser-335 to Lys-350 has biased composition (polar residues). Residues Ser-335–Glu-359 are disordered. Residue Cys-355 is the site of S-palmitoyl cysteine attachment.

This sequence belongs to the G-protein coupled receptor 1 family. In terms of assembly, interacts with MAS1. Interacts with ARRB1. Interacts with FLNA (via filamin repeat 21); increases PKA-mediated phosphorylation of FLNA. C-terminal Ser or Thr residues may be phosphorylated.

The protein localises to the cell membrane. In terms of biological role, receptor for angiotensin II, a vasoconstricting peptide, which acts as a key regulator of blood pressure and sodium retention by the kidney. The activated receptor in turn couples to G-alpha proteins G(q) (GNAQ, GNA11, GNA14 or GNA15) and thus activates phospholipase C and increases the cytosolic Ca(2+) concentrations, which in turn triggers cellular responses such as stimulation of protein kinase C. This chain is Type-1 angiotensin II receptor (AGTR1), found in Ovis aries (Sheep).